The sequence spans 1067 residues: Lon protease homolog, mitochondrial (1067 aa).

The transit peptide at 1 to 36 (MITRLSGACLRRSGAKRNWPREHLVHRSLLASFSTT) directs the protein to the mitochondrion. A compositionally biased stretch (basic and acidic residues) spans 55–82 (KSKEPKDNKPLDNKNDPKKTHNEDESHT). 2 disordered regions span residues 55-142 (KSKE…MPLN) and 262-314 (IPPK…ESTP). Acidic residues predominate over residues 128 to 139 (FELGGEENEDEM). The Lon N-terminal domain maps to 162 to 425 (LLALPIARRP…KALYVLKKEL (264 aa)). Over residues 293–311 (VKSDLKQDNGKEEPEKEVE) the composition is skewed to basic and acidic residues. An ATP-binding site is contributed by 578–585 (GPPGVGKT). A disordered region spans residues 791 to 820 (NSKEKSTGKSGKKTSPQSSEDAANKEASSV). A Lon proteolytic domain is found at 854–1040 (TTPPGVVMGL…DDVFKRVFSN (187 aa)). Catalysis depends on residues Ser-946 and Lys-989.

It belongs to the peptidase S16 family. As to quaternary structure, homohexamer or homoheptamer. Organized in a ring with a central cavity.

The protein localises to the mitochondrion matrix. It carries out the reaction Hydrolysis of proteins in presence of ATP.. Functionally, ATP-dependent serine protease that mediates the selective degradation of misfolded, unassembled or oxidatively damaged polypeptides as well as certain short-lived regulatory proteins in the mitochondrial matrix. May also have a chaperone function in the assembly of inner membrane protein complexes. Participates in the regulation of mitochondrial gene expression and in the maintenance of the integrity of the mitochondrial genome. Binds to mitochondrial DNA in a site-specific manner. In Schizosaccharomyces pombe (strain 972 / ATCC 24843) (Fission yeast), this protein is Lon protease homolog, mitochondrial (pim1).